A 610-amino-acid polypeptide reads, in one-letter code: UvrABC system protein C (610 aa).

A GIY-YIG domain is found at 13–91; it reads HLPGVYRMYD…IKENQPKYNV (79 aa). In terms of domain architecture, UVR spans 201–236; sequence GQVVEHLVQKMENAAQELDFEAAARFRDQIQSVRAV.

This sequence belongs to the UvrC family. Interacts with UvrB in an incision complex.

It localises to the cytoplasm. Functionally, the UvrABC repair system catalyzes the recognition and processing of DNA lesions. UvrC both incises the 5' and 3' sides of the lesion. The N-terminal half is responsible for the 3' incision and the C-terminal half is responsible for the 5' incision. This chain is UvrABC system protein C, found in Actinobacillus pleuropneumoniae serotype 5b (strain L20).